The primary structure comprises 156 residues: 6,7-dimethyl-8-ribityllumazine synthase (156 aa).

5-amino-6-(D-ribitylamino)uracil is bound by residues Phe25, 59–61, and 83–85; these read AWE and AVI. Residue 88 to 89 coordinates (2S)-2-hydroxy-3-oxobutyl phosphate; sequence ST. Catalysis depends on His91, which acts as the Proton donor. Asn116 contacts 5-amino-6-(D-ribitylamino)uracil. Arg130 is a binding site for (2S)-2-hydroxy-3-oxobutyl phosphate.

The protein belongs to the DMRL synthase family. As to quaternary structure, forms an icosahedral capsid composed of 60 subunits, arranged as a dodecamer of pentamers.

It carries out the reaction (2S)-2-hydroxy-3-oxobutyl phosphate + 5-amino-6-(D-ribitylamino)uracil = 6,7-dimethyl-8-(1-D-ribityl)lumazine + phosphate + 2 H2O + H(+). Its pathway is cofactor biosynthesis; riboflavin biosynthesis; riboflavin from 2-hydroxy-3-oxobutyl phosphate and 5-amino-6-(D-ribitylamino)uracil: step 1/2. Catalyzes the formation of 6,7-dimethyl-8-ribityllumazine by condensation of 5-amino-6-(D-ribitylamino)uracil with 3,4-dihydroxy-2-butanone 4-phosphate. This is the penultimate step in the biosynthesis of riboflavin. This is 6,7-dimethyl-8-ribityllumazine synthase from Acinetobacter baumannii (strain AB0057).